Here is a 368-residue protein sequence, read N- to C-terminus: MTTEMQEIAITEEKPLLPGQSDAVKDAEIAARILLDQGQEHTVETPHGVLHVTVHGSGNARRPAILTIHDVGMDSKSCFSTLFRFEEMQEIVKNFTVVHIDAPGQEEGAAVYPAGYQYASMDQVSEMLPAVLQFFNFRTIIGVGVGAGAYILSRFTLNNPEAVEGLVLVNVDPNARGWMDWAAHKLSNLTSSLSDQIISHLFSQQELSANTELIQTHRERITKAPNLLNIELFWKSYLGRRDLSLDRNNTFKCPVMLVVGDQAPYEEAAVECNSKLDPTTTSFLKMADAGGMPQLTQPSKLTEAFKYFIQGMGYMASSCMTRLSRSRTTSLSSSYSMEGSRSRSRTLSQGSQGGQLPPSPSNTMEVSC.

Low complexity predominate over residues 330 to 339 (SLSSSYSMEG). The segment at 330–368 (SLSSSYSMEGSRSRSRTLSQGSQGGQLPPSPSNTMEVSC) is disordered.

It belongs to the NDRG family.

It localises to the cytoplasm. Contributes to the regulation of the Wnt signaling pathway. Down-regulates CTNNB1-mediated transcriptional activation of target genes. May be involved in neuron differentiation. This is Protein NDRG2 (ndrg2) from Danio rerio (Zebrafish).